We begin with the raw amino-acid sequence, 479 residues long: Glutamyl-tRNA(Gln) amidotransferase subunit A (479 aa).

Active-site charge relay system residues include Lys-71 and Ser-146. Ser-170 functions as the Acyl-ester intermediate in the catalytic mechanism.

This sequence belongs to the amidase family. GatA subfamily. As to quaternary structure, heterotrimer of A, B and C subunits.

It catalyses the reaction L-glutamyl-tRNA(Gln) + L-glutamine + ATP + H2O = L-glutaminyl-tRNA(Gln) + L-glutamate + ADP + phosphate + H(+). Allows the formation of correctly charged Gln-tRNA(Gln) through the transamidation of misacylated Glu-tRNA(Gln) in organisms which lack glutaminyl-tRNA synthetase. The reaction takes place in the presence of glutamine and ATP through an activated gamma-phospho-Glu-tRNA(Gln). This Lactobacillus johnsonii (strain CNCM I-12250 / La1 / NCC 533) protein is Glutamyl-tRNA(Gln) amidotransferase subunit A.